The primary structure comprises 255 residues: Sushi domain-containing protein 3 (255 aa).

The interval 1 to 25 is disordered; the sequence is MRWAAATLRGKARPRGRAGVTTPAP. The Extracellular portion of the chain corresponds to 1 to 103; it reads MRWAAATLRG…VPPHETFGFK (103 aa). A glycan (N-linked (GlcNAc...) asparagine) is linked at Asn-27. The region spanning 30–93 is the Sushi domain; that stretch reads GTCAKLRLPP…WSSGSPVCKL (64 aa). Cystine bridges form between Cys-32-Cys-75 and Cys-61-Cys-91. Residues 104 to 124 form a helical membrane-spanning segment; it reads VAVIASIVSCAIILLMSMAFL. The Cytoplasmic segment spans residues 125 to 255; it reads TCCLLKCVKK…PQQPAAYALG (131 aa). A disordered region spans residues 173 to 255; sequence SGPSQAHDNH…PQQPAAYALG (83 aa). A compositionally biased stretch (basic and acidic residues) spans 179–191; that stretch reads HDNHSFTTDHGES.

Highly expressed in estrogen receptor-positive breast tumors.

Its subcellular location is the cell membrane. In terms of biological role, may play a role in breast tumorigenesis by promoting estrogen-dependent cell proliferation, cell-cell interactions and migration. The protein is Sushi domain-containing protein 3 (SUSD3) of Homo sapiens (Human).